A 1053-amino-acid chain; its full sequence is Middle cell wall protein (1053 aa).

The N-terminal stretch at 1-23 (MKKVVNSVLASALALTVAPMAFA) is a signal peptide. SLH domains lie at 26–89 (EAAT…KLAQ), 90–153 (FSNT…KGVW), and 154–203 (PNSM…FGTD).

The middle cell wall layer is composed of subunits of the middle cell wall protein. These proteins form a hexagonal array with a lattice constant of 14.5 nM in the middle cell wall layers.

The protein resides in the secreted. It localises to the cell wall. The protein localises to the S-layer. Functionally, the middle wall protein binds to peptidoglycan and to the outer cell wall protein. The protein is Middle cell wall protein of Brevibacillus brevis (strain 47 / JCM 6285 / NBRC 100599).